A 258-amino-acid polypeptide reads, in one-letter code: Thiazole synthase (258 aa).

The active-site Schiff-base intermediate with DXP is the Lys-100. Residues Gly-161, 187–188 (AG), and 209–210 (NT) contribute to the 1-deoxy-D-xylulose 5-phosphate site.

This sequence belongs to the ThiG family. As to quaternary structure, homotetramer. Forms heterodimers with either ThiH or ThiS.

The protein resides in the cytoplasm. The catalysed reaction is [ThiS sulfur-carrier protein]-C-terminal-Gly-aminoethanethioate + 2-iminoacetate + 1-deoxy-D-xylulose 5-phosphate = [ThiS sulfur-carrier protein]-C-terminal Gly-Gly + 2-[(2R,5Z)-2-carboxy-4-methylthiazol-5(2H)-ylidene]ethyl phosphate + 2 H2O + H(+). It participates in cofactor biosynthesis; thiamine diphosphate biosynthesis. Functionally, catalyzes the rearrangement of 1-deoxy-D-xylulose 5-phosphate (DXP) to produce the thiazole phosphate moiety of thiamine. Sulfur is provided by the thiocarboxylate moiety of the carrier protein ThiS. In vitro, sulfur can be provided by H(2)S. In Campylobacter jejuni subsp. jejuni serotype O:6 (strain 81116 / NCTC 11828), this protein is Thiazole synthase.